Consider the following 688-residue polypeptide: Sodium channel and clathrin linker 1 (688 aa).

Ala2 bears the N-acetylalanine mark. Positions 69–673 form a coiled coil; it reads ELNGQLKYYQ…SASQQLSVIT (605 aa). Ser681 bears the Phosphoserine mark.

In terms of assembly, interacts with SCN10A and clathrin. Identified in a complex containing SCN10A, clathrin and SCLT1.

Its subcellular location is the cytoplasm. The protein resides in the cytoskeleton. It localises to the microtubule organizing center. The protein localises to the centrosome. It is found in the centriole. Adapter protein that links SCN10A to clathrin. Regulates SCN10A channel activity, possibly by promoting channel internalization. The protein is Sodium channel and clathrin linker 1 (SCLT1) of Homo sapiens (Human).